The chain runs to 516 residues: Apolipoprotein N-acyltransferase (516 aa).

6 helical membrane passes run 24-44 (LAQA…LLYL), 58-78 (GWCY…ISIH), 90-110 (LLTL…AWLW), 125-145 (LAFA…LTGF), 163-183 (APLG…ALLV), and 192-212 (PPAL…GLAL). Residues 230–471 (VQGNVEQNLK…RAVLYGEVTP (242 aa)) enclose the CN hydrolase domain. The active-site Proton acceptor is the E270. K331 is a catalytic residue. C383 (nucleophile) is an active-site residue. A helical transmembrane segment spans residues 479-499 (LRWRAWPLAGLAVLLLGWALL).

The protein belongs to the CN hydrolase family. Apolipoprotein N-acyltransferase subfamily.

The protein localises to the cell inner membrane. The enzyme catalyses N-terminal S-1,2-diacyl-sn-glyceryl-L-cysteinyl-[lipoprotein] + a glycerophospholipid = N-acyl-S-1,2-diacyl-sn-glyceryl-L-cysteinyl-[lipoprotein] + a 2-acyl-sn-glycero-3-phospholipid + H(+). It functions in the pathway protein modification; lipoprotein biosynthesis (N-acyl transfer). Functionally, catalyzes the phospholipid dependent N-acylation of the N-terminal cysteine of apolipoprotein, the last step in lipoprotein maturation. The chain is Apolipoprotein N-acyltransferase from Azotobacter vinelandii (strain DJ / ATCC BAA-1303).